A 238-amino-acid polypeptide reads, in one-letter code: Uridylate kinase (238 aa).

12–15 (KLSG) is a binding site for ATP. UMP is bound at residue G54. ATP contacts are provided by G55 and R59. Residues D74 and 135-142 (TGNPFFTT) contribute to the UMP site. Residues T162, Y168, and D171 each coordinate ATP.

This sequence belongs to the UMP kinase family. As to quaternary structure, homohexamer.

It is found in the cytoplasm. The catalysed reaction is UMP + ATP = UDP + ADP. It participates in pyrimidine metabolism; CTP biosynthesis via de novo pathway; UDP from UMP (UMPK route): step 1/1. Its activity is regulated as follows. Inhibited by UTP. In terms of biological role, catalyzes the reversible phosphorylation of UMP to UDP. The chain is Uridylate kinase from Nitrosospira multiformis (strain ATCC 25196 / NCIMB 11849 / C 71).